The primary structure comprises 503 residues: UDP-N-acetylmuramoylalanine--D-glutamate ligase (503 aa).

129–135 (GTNGKTT) is an ATP binding site.

This sequence belongs to the MurCDEF family.

The protein localises to the cytoplasm. The catalysed reaction is UDP-N-acetyl-alpha-D-muramoyl-L-alanine + D-glutamate + ATP = UDP-N-acetyl-alpha-D-muramoyl-L-alanyl-D-glutamate + ADP + phosphate + H(+). It functions in the pathway cell wall biogenesis; peptidoglycan biosynthesis. Functionally, cell wall formation. Catalyzes the addition of glutamate to the nucleotide precursor UDP-N-acetylmuramoyl-L-alanine (UMA). The polypeptide is UDP-N-acetylmuramoylalanine--D-glutamate ligase (Burkholderia vietnamiensis (strain G4 / LMG 22486) (Burkholderia cepacia (strain R1808))).